A 312-amino-acid chain; its full sequence is Malate dehydrogenase (312 aa).

NAD(+)-binding positions include 7–13 (GAAGGIG) and D34. Substrate-binding residues include R81 and R87. Residues N94 and 117-119 (ITN) contribute to the NAD(+) site. Substrate contacts are provided by N119 and R153. The active-site Proton acceptor is H177. An NAD(+)-binding site is contributed by M227.

It belongs to the LDH/MDH superfamily. MDH type 1 family. In terms of assembly, homodimer.

It carries out the reaction (S)-malate + NAD(+) = oxaloacetate + NADH + H(+). Functionally, catalyzes the reversible oxidation of malate to oxaloacetate. The protein is Malate dehydrogenase of Salmonella dublin (strain CT_02021853).